The sequence spans 329 residues: Signal recognition particle receptor FtsY (329 aa).

Residues glycine 127 to threonine 134, aspartate 209 to arginine 213, and threonine 273 to aspartate 276 contribute to the GTP site.

This sequence belongs to the GTP-binding SRP family. FtsY subfamily. Part of the signal recognition particle protein translocation system, which is composed of SRP and FtsY.

It localises to the cell membrane. The protein localises to the cytoplasm. The enzyme catalyses GTP + H2O = GDP + phosphate + H(+). In terms of biological role, involved in targeting and insertion of nascent membrane proteins into the cytoplasmic membrane. Acts as a receptor for the complex formed by the signal recognition particle (SRP) and the ribosome-nascent chain (RNC). The protein is Signal recognition particle receptor FtsY of Bacillus subtilis (strain 168).